A 73-amino-acid polypeptide reads, in one-letter code: Disintegrin lutosin (73 aa).

The Disintegrin domain maps to 1–73; that stretch reads EAGEECDCGS…ADCPRNGLYG (73 aa). Cystine bridges form between Cys6/Cys21, Cys8/Cys16, Cys15/Cys38, Cys29/Cys35, Cys34/Cys59, and Cys47/Cys66. The Cell attachment site signature appears at 51 to 53; the sequence is RGD.

This sequence belongs to the venom metalloproteinase (M12B) family. P-II subfamily. P-IIa sub-subfamily. As to quaternary structure, monomer (disintegrin). In terms of tissue distribution, expressed by the venom gland.

The protein resides in the secreted. In terms of biological role, inhibits fibrinogen interaction with platelets. Acts by binding to alpha-IIb/beta-3 (ITGA2B/ITGB3) on the platelet surface and inhibits aggregation induced by ADP, thrombin, platelet-activating factor and collagen. The sequence is that of Disintegrin lutosin from Crotalus lutosus (Great basin rattlesnake).